The chain runs to 332 residues: Beta-hexosaminidase (332 aa).

Residues D62, R70, R131, and 161–162 (KH) each bind substrate. The active-site Proton donor/acceptor is H174. D244 functions as the Nucleophile in the catalytic mechanism.

This sequence belongs to the glycosyl hydrolase 3 family. NagZ subfamily.

It is found in the cytoplasm. The catalysed reaction is Hydrolysis of terminal non-reducing N-acetyl-D-hexosamine residues in N-acetyl-beta-D-hexosaminides.. It participates in cell wall biogenesis; peptidoglycan recycling. Its function is as follows. Plays a role in peptidoglycan recycling by cleaving the terminal beta-1,4-linked N-acetylglucosamine (GlcNAc) from peptide-linked peptidoglycan fragments, giving rise to free GlcNAc, anhydro-N-acetylmuramic acid and anhydro-N-acetylmuramic acid-linked peptides. The chain is Beta-hexosaminidase from Pseudomonas aeruginosa (strain LESB58).